The sequence spans 191 residues: Recombination protein RecR (191 aa).

The C4-type zinc finger occupies 51-66; the sequence is CQTCFHLSADPECEIC. The Toprim domain maps to 74–168; the sequence is GVICVVADSR…SVSRIAYGLP (95 aa).

This sequence belongs to the RecR family.

Functionally, may play a role in DNA repair. It seems to be involved in an RecBC-independent recombinational process of DNA repair. It may act with RecF and RecO. This chain is Recombination protein RecR, found in Synechococcus sp. (strain CC9605).